We begin with the raw amino-acid sequence, 500 residues long: Trehalose-6-phosphate synthase (500 aa).

Arg28 contributes to the D-glucose 6-phosphate binding site. 48 to 49 (GG) provides a ligand contact to UDP-alpha-D-glucose. Residues Tyr104 and Asp158 each coordinate D-glucose 6-phosphate. The UDP-alpha-D-glucose site is built by Arg300 and Lys305. Arg338 provides a ligand contact to D-glucose 6-phosphate. 403–407 (LVAKE) is a binding site for UDP-alpha-D-glucose.

This sequence belongs to the glycosyltransferase 20 family. As to quaternary structure, homotetramer.

It catalyses the reaction ADP-alpha-D-glucose + D-glucose 6-phosphate = alpha,alpha-trehalose 6-phosphate + ADP + H(+). It carries out the reaction CDP-alpha-D-glucose + D-glucose 6-phosphate = alpha,alpha-trehalose 6-phosphate + CDP + H(+). The enzyme catalyses GDP-alpha-D-glucose + D-glucose 6-phosphate = alpha,alpha-trehalose 6-phosphate + GDP + H(+). The catalysed reaction is TDP-alpha-D-glucose + D-glucose 6-phosphate = 5-methyl-UDP + alpha,alpha-trehalose 6-phosphate + H(+). It catalyses the reaction D-glucose 6-phosphate + UDP-alpha-D-glucose = alpha,alpha-trehalose 6-phosphate + UDP + H(+). It participates in glycan biosynthesis; trehalose biosynthesis. Its function is as follows. Probably involved in the osmoprotection via the biosynthesis of trehalose and in the production of glycogen and alpha-glucan via the TreS-Pep2 branch involved in the biosynthesis of maltose-1-phosphate (M1P). Catalyzes the transfer of glucose from UDP-glucose (UDP-Glc) to D-glucose 6-phosphate (Glc-6-P) to form trehalose-6-phosphate. Probably also able to use ADP-Glc, CDP-Glc, GDP-Glc and TDP-Glc as glucosyl donors. The sequence is that of Trehalose-6-phosphate synthase from Mycobacterium ulcerans (strain Agy99).